A 159-amino-acid polypeptide reads, in one-letter code: 2-C-methyl-D-erythritol 2,4-cyclodiphosphate synthase (159 aa).

A divalent metal cation is bound by residues aspartate 10 and histidine 12. 4-CDP-2-C-methyl-D-erythritol 2-phosphate contacts are provided by residues 10–12 (DVH) and 36–37 (HS). Histidine 44 is an a divalent metal cation binding site. 4-CDP-2-C-methyl-D-erythritol 2-phosphate contacts are provided by residues 58–60 (DIG), 134–137 (TTSE), phenylalanine 141, and arginine 144.

It belongs to the IspF family. In terms of assembly, homotrimer. A divalent metal cation is required as a cofactor.

It catalyses the reaction 4-CDP-2-C-methyl-D-erythritol 2-phosphate = 2-C-methyl-D-erythritol 2,4-cyclic diphosphate + CMP. It functions in the pathway isoprenoid biosynthesis; isopentenyl diphosphate biosynthesis via DXP pathway; isopentenyl diphosphate from 1-deoxy-D-xylulose 5-phosphate: step 4/6. Involved in the biosynthesis of isopentenyl diphosphate (IPP) and dimethylallyl diphosphate (DMAPP), two major building blocks of isoprenoid compounds. Catalyzes the conversion of 4-diphosphocytidyl-2-C-methyl-D-erythritol 2-phosphate (CDP-ME2P) to 2-C-methyl-D-erythritol 2,4-cyclodiphosphate (ME-CPP) with a corresponding release of cytidine 5-monophosphate (CMP). This chain is 2-C-methyl-D-erythritol 2,4-cyclodiphosphate synthase, found in Cereibacter sphaeroides (strain ATCC 17029 / ATH 2.4.9) (Rhodobacter sphaeroides).